The primary structure comprises 476 residues: Bifunctional protein HldE (476 aa).

The tract at residues 1–320 is ribokinase; sequence MQNPHIPSFA…RAVHQEGGSG (320 aa). An ATP-binding site is contributed by 196–199; that stretch reads NLSE. Asp265 is an active-site residue. A cytidylyltransferase region spans residues 345-476; that stretch reads FTNGCFDIIH…KIVERIREKD (132 aa).

It in the N-terminal section; belongs to the carbohydrate kinase PfkB family. In the C-terminal section; belongs to the cytidylyltransferase family. As to quaternary structure, homodimer.

It catalyses the reaction D-glycero-beta-D-manno-heptose 7-phosphate + ATP = D-glycero-beta-D-manno-heptose 1,7-bisphosphate + ADP + H(+). The enzyme catalyses D-glycero-beta-D-manno-heptose 1-phosphate + ATP + H(+) = ADP-D-glycero-beta-D-manno-heptose + diphosphate. It functions in the pathway nucleotide-sugar biosynthesis; ADP-L-glycero-beta-D-manno-heptose biosynthesis; ADP-L-glycero-beta-D-manno-heptose from D-glycero-beta-D-manno-heptose 7-phosphate: step 1/4. The protein operates within nucleotide-sugar biosynthesis; ADP-L-glycero-beta-D-manno-heptose biosynthesis; ADP-L-glycero-beta-D-manno-heptose from D-glycero-beta-D-manno-heptose 7-phosphate: step 3/4. Catalyzes the phosphorylation of D-glycero-D-manno-heptose 7-phosphate at the C-1 position to selectively form D-glycero-beta-D-manno-heptose-1,7-bisphosphate. Its function is as follows. Catalyzes the ADP transfer from ATP to D-glycero-beta-D-manno-heptose 1-phosphate, yielding ADP-D-glycero-beta-D-manno-heptose. The protein is Bifunctional protein HldE of Alcanivorax borkumensis (strain ATCC 700651 / DSM 11573 / NCIMB 13689 / SK2).